The chain runs to 174 residues: RxLR effector protein 207 (174 aa).

An N-terminal signal peptide occupies residues 1-20 (MSKVFLLLVLSVFALVSCDA). Positions 46 to 62 (RMLRAQEEPTNAADEER) match the RxLR-dEER motif. Residues 82-99 (VTNSKLVQSMNNKLASLT) are disordered.

Belongs to the RxLR effector family. Interacts with Nicotiana benthamiana ACD11, BPA1 (binding partner of ACD11), as well as BPA-like proteins BPL1, BPL2, BPL3 and BPL4.

The protein localises to the secreted. It localises to the host cell membrane. Secreted effector that activates ROS-mediated cell death in plant host and is essential for virulence. Plays a role in the transition from the biotrophic to necrotrophic stage. Associates with and promotes the degradation of Nicotiana benthamiana BPA1, BPL1, BPL2, and BPL4 to disrupt ACD11 stabilization in a 26S proteasome-dependent manner. The sequence is that of RxLR effector protein 207 from Phytophthora capsici.